Consider the following 233-residue polypeptide: Cell surface glycoprotein gp42 (233 aa).

Residues 1 to 16 (MLLWMVLLLCVSMTEA) form the signal peptide. Ig-like domains are found at residues 23-98 (PVLS…GTIQ) and 115-195 (PVLT…RDIS). N-linked (GlcNAc...) asparagine glycosylation is found at asparagine 29, asparagine 66, and asparagine 181. Intrachain disulfides connect cysteine 40-cysteine 88 and cysteine 136-cysteine 184. Glycine 206 is lipidated: GPI-anchor amidated glycine. Residues 207-233 (TASMKSTTVVIWLPVSCLVGWPWLLRF) constitute a propeptide, removed in mature form.

As to expression, NK cells.

The protein localises to the cell membrane. The sequence is that of Cell surface glycoprotein gp42 from Rattus norvegicus (Rat).